We begin with the raw amino-acid sequence, 428 residues long: G2/mitotic-specific cyclin-1 (428 aa).

The interval 1-22 (MKFSEEKNVSNNPTNFEGGLDS) is disordered.

This sequence belongs to the cyclin family. Cyclin AB subfamily. Interacts with the CDC2 protein kinase to form a serine/threonine kinase holoenzyme complex also known as maturation promoting factor (MPF). The cyclin subunit imparts substrate specificity to the complex.

Functionally, essential for the control of the cell cycle at the G2/M (mitosis) transition. This chain is G2/mitotic-specific cyclin-1, found in Medicago sativa subsp. varia (Alfalfa).